Consider the following 350-residue polypeptide: tRNA uridine(34) hydroxylase (350 aa).

One can recognise a Rhodanese domain in the interval 146–240 (DDPDALFIDM…YARKAREQGL (95 aa)). Cys200 serves as the catalytic Cysteine persulfide intermediate.

Belongs to the TrhO family.

It catalyses the reaction uridine(34) in tRNA + AH2 + O2 = 5-hydroxyuridine(34) in tRNA + A + H2O. Its function is as follows. Catalyzes oxygen-dependent 5-hydroxyuridine (ho5U) modification at position 34 in tRNAs, the first step in 5-carboxymethoxyuridine (cmo5U) biosynthesis. May be part of an alternate pathway, which is able to bypass cmo5U biogenesis in a subset of tRNAs under aerobic conditions. This is tRNA uridine(34) hydroxylase from Escherichia coli O9:H4 (strain HS).